The following is a 64-amino-acid chain: MYVCLCNGISDKKIRQAVRQFHPQSFQQLRKFIPVGNQCGKCIRAAREVMQDELTQMPEFKEIA.

Residues C4, C6, C39, and C42 each contribute to the [2Fe-2S] cluster site.

The protein belongs to the Bfd family. Monomer. Interacts with bacterioferritin (BFR); up to 12 Bfd proteins can bind to the BFR. It depends on [2Fe-2S] cluster as a cofactor.

Required for mobilization of iron from the bacterioferritin (BFR) complex. The polypeptide is Bacterioferritin-associated ferredoxin (bfd) (Salmonella typhi).